Consider the following 157-residue polypeptide: Thiosulfate sulfurtransferase/rhodanese-like domain-containing protein 3 (157 aa).

Positions 52–154 (NSKDIMLIDV…WVTYEISEEK (103 aa)) constitute a Rhodanese domain. Position 96 is an N6-succinyllysine (K96). C114 (cysteine persulfide intermediate) is an active-site residue.

The sequence is that of Thiosulfate sulfurtransferase/rhodanese-like domain-containing protein 3 (Tstd3) from Mus musculus (Mouse).